A 522-amino-acid polypeptide reads, in one-letter code: Lysine--tRNA ligase (522 aa).

Residues Pro44–Thr52 carry the 'HIGH' region motif. The short motif at Lys290–Ser294 is the 'KMSKS' region element. An ATP-binding site is contributed by Lys293.

It belongs to the class-I aminoacyl-tRNA synthetase family.

It localises to the cytoplasm. The catalysed reaction is tRNA(Lys) + L-lysine + ATP = L-lysyl-tRNA(Lys) + AMP + diphosphate. This chain is Lysine--tRNA ligase, found in Rickettsia bellii (strain OSU 85-389).